Consider the following 256-residue polypeptide: MRYQASPALAKAPRALLCIHGAGCSPAIFRVQLSKLRAALREDFEFVYVTAPFPSSAGPGILPVFADLGPYYSWFESSSGNNNNGPSVGERLAAVHDPIRRTIVDWQTQHPHIPIVGAIGFSEGALVTTLLLWQQQMGRLPWLPRMSVAMLICPWYQDEASQYMRNEVMENHDDDHDSKDTEWQEELVIRIPTLHLQGRDDFALAGSKMLVARHFSPREAQVLEFAGQHQFPNRPRDVLEVINRFRKLCVTVQTLE.

Catalysis depends on charge relay system residues S122, D201, and H229.

This sequence belongs to the LovG family.

It catalyses the reaction dihydromonacolin L-[lovastatin nonaketide synthase] + H2O = holo-[lovastatin nonaketide synthase] + dihydromonacolin L carboxylate + H(+). Its pathway is polyketide biosynthesis; lovastatin biosynthesis. Its function is as follows. Esterase; part of the gene cluster that mediates the biosynthesis of lovastatin (also known as mevinolin, mevacor or monacolin K), a hypolipidemic inhibitor of (3S)-hydroxymethylglutaryl-coenzyme A (HMG-CoA) reductase (HMGR). The first step in the biosynthesis of lovastatin is the production of dihydromonacolin L acid by the lovastatin nonaketide synthase lovB and the trans-acting enoyl reductase lovC via condensation of one acetyl-CoA unit and 8 malonyl-CoA units. Dihydromonacolin L acid is released from lovB by the thioesterase lovG. Next, dihydromonacolin L acid is oxidized by the dihydromonacolin L monooxygenase lovA twice to form monacolin J acid. The 2-methylbutyrate moiety of lovastatin is synthesized by the lovastatin diketide synthase lovF via condensation of one acetyl-CoA unit and one malonyl-CoA unit. Finally, the covalent attachment of this moiety to monacolin J acid is catalyzed by the transesterase lovD to yield lovastatin. LovD has broad substrate specificity and can also convert monacolin J to simvastatin using alpha-dimethylbutanoyl-S-methyl-3-mercaptopropionate (DMB-S-MMP) as the thioester acyl donor, and can also catalyze the reverse reaction and function as hydrolase in vitro. LovD has much higher activity with LovF-bound 2-methylbutanoate than with free diketide substrates. Functionally, esterase that catalyzes the release of covalently bound dihydromonacolin L from LovB during lovastatin biosynthesis. This Aspergillus terreus (strain NIH 2624 / FGSC A1156) protein is Dihydromonacolin L-[lovastatin nonaketide synthase] thioesterase.